The following is a 507-amino-acid chain: ATP synthase subunit alpha, chloroplastic (507 aa).

Position 170–177 (170–177) interacts with ATP; sequence GDRQTGKT.

The protein belongs to the ATPase alpha/beta chains family. As to quaternary structure, F-type ATPases have 2 components, CF(1) - the catalytic core - and CF(0) - the membrane proton channel. CF(1) has five subunits: alpha(3), beta(3), gamma(1), delta(1), epsilon(1). CF(0) has four main subunits: a, b, b' and c.

It localises to the plastid. The protein resides in the chloroplast thylakoid membrane. The catalysed reaction is ATP + H2O + 4 H(+)(in) = ADP + phosphate + 5 H(+)(out). Its function is as follows. Produces ATP from ADP in the presence of a proton gradient across the membrane. The alpha chain is a regulatory subunit. The sequence is that of ATP synthase subunit alpha, chloroplastic from Nandina domestica (Heavenly bamboo).